Consider the following 120-residue polypeptide: Large ribosomal subunit protein bL19 (120 aa).

Belongs to the bacterial ribosomal protein bL19 family.

In terms of biological role, this protein is located at the 30S-50S ribosomal subunit interface and may play a role in the structure and function of the aminoacyl-tRNA binding site. The protein is Large ribosomal subunit protein bL19 of Trichormus variabilis (strain ATCC 29413 / PCC 7937) (Anabaena variabilis).